The following is a 137-amino-acid chain: Small ribosomal subunit protein uS11 (137 aa).

The disordered stretch occupies residues 116–137; sequence EDVTPIPHDGTRPKGGRRGRRV.

The protein belongs to the universal ribosomal protein uS11 family. In terms of assembly, part of the 30S ribosomal subunit.

Its function is as follows. Located on the platform of the 30S subunit. The protein is Small ribosomal subunit protein uS11 of Pyrococcus furiosus (strain ATCC 43587 / DSM 3638 / JCM 8422 / Vc1).